We begin with the raw amino-acid sequence, 90 residues long: Large ribosomal subunit protein bL27 (90 aa).

The segment at 1 to 20 (MAHKKAGGSSRNGRDSAGKR) is disordered.

Belongs to the bacterial ribosomal protein bL27 family.

The protein is Large ribosomal subunit protein bL27 of Nitrobacter hamburgensis (strain DSM 10229 / NCIMB 13809 / X14).